A 203-amino-acid polypeptide reads, in one-letter code: Hydra actinoporin-like toxin 2 (203 aa).

A signal peptide spans 1-21; that stretch reads MLSYLCFGCFLVSASLEIACG. The Cell attachment site motif lies at 175 to 177; sequence RGG.

The protein belongs to the actinoporin family. HALT subfamily. Octamer or nonamer in membranes. Monomer in the soluble state. In vitro, interacts with folate receptor alpha (of target organism). As to expression, strongly expressed in the gland and mucous cells in the endoderm.

It localises to the nematocyst. It is found in the secreted. The protein resides in the target cell membrane. Pore-forming protein that forms hydrophilic pores and causes cytolysis. Compared to equinatoxin-2 (AC P61914), it reveals lower cytolysis activity (5-12-fold difference, tested on erythrocytes), a larger pore size (probably 2-3 nm) and different affinity to membrane lipids (100-fold lower affinity to sphingomyelin). Binds to sulfatides (SFT). Shows cytolytic activity on HeLa cells, with a different potency than its paralogs (from most potent to less potent: HALT-4&gt;HALT-6~HALT-1&gt;HALT-3&gt;HALT-7&gt;HALT-2). Pore formation is a multi-step process that involves specific recognition of membrane lipid by a protein aromatic residues rich region, firm binding to the membrane (mainly driven by hydrophobic interactions) accompanied by the transfer of the N-terminal region to the lipid-water interface and finally pore formation after oligomerization of monomers. In vitro, binds to the folate receptor alpha (FOLR1), a GPI-anchored membrane protein that plays a major role in the uptake of folate/folic acid into cells via endocytosis, suggesting a possible involvement of this receptor in the mechanism of HALT-1-induced cell lysis. In vivo, does not cause visible paralysis in larvae of the blowfly Sarcophaga faculata, the most common arthropod prey of Hydra. In Hydra vulgaris (Hydra), this protein is Hydra actinoporin-like toxin 2.